A 109-amino-acid polypeptide reads, in one-letter code: Thiosulfate sulfurtransferase GlpE (109 aa).

Residues 16-104 (REQGAVVVDI…WRSTYPAETA (89 aa)) form the Rhodanese domain. Catalysis depends on cysteine 64, which acts as the Cysteine persulfide intermediate.

It belongs to the GlpE family.

It localises to the cytoplasm. It carries out the reaction thiosulfate + hydrogen cyanide = thiocyanate + sulfite + 2 H(+). The catalysed reaction is thiosulfate + [thioredoxin]-dithiol = [thioredoxin]-disulfide + hydrogen sulfide + sulfite + 2 H(+). In terms of biological role, transferase that catalyzes the transfer of sulfur from thiosulfate to thiophilic acceptors such as cyanide or dithiols. May function in a CysM-independent thiosulfate assimilation pathway by catalyzing the conversion of thiosulfate to sulfite, which can then be used for L-cysteine biosynthesis. In Pseudomonas fluorescens (strain ATCC BAA-477 / NRRL B-23932 / Pf-5), this protein is Thiosulfate sulfurtransferase GlpE.